Here is a 366-residue protein sequence, read N- to C-terminus: Elongation factor Ts, mitochondrial (366 aa).

A mitochondrion-targeting transit peptide spans 1 to 50 (MAWSQSARKPMIGLLFRAQQHSARGYSYSAFQAHLSSSNVDQSATLLRRF).

This sequence belongs to the EF-Ts family.

The protein localises to the mitochondrion. Its function is as follows. Associates with the EF-Tu.GDP complex and induces the exchange of GDP to GTP. It remains bound to the aminoacyl-tRNA.EF-Tu.GTP complex up to the GTP hydrolysis stage on the ribosome. The sequence is that of Elongation factor Ts, mitochondrial from Oryza sativa subsp. japonica (Rice).